A 316-amino-acid chain; its full sequence is MSFSAKVKGEICRYIDISKEEALAQISAIMKVCGTLAFSGRQISFKMTTENPASARLMFTILKDYFDIHAKLMVKKSNSLKKNNIYMVVVTEEMGVKKLLEITGILREIDGIMSLDYHIDENLVDTEEKKKAYIRGAFIGGGSISNPEKTYHLEFVTHSQEYAEDLGKLINTFGLKAKVIQRKNSYIVYIKEGEQIVDLLNIIGAHTALLELENIRIMKEMRNNVNRLVNCETANLSKTVNAAVRQVESIKLIEREIGLARLPKNLREVAELRLTYPEESLKELGEMLEPPVGKSGVNHRLRKIEKIAEELRTGNF.

The H-T-H motif DNA-binding region spans 280 to 313 (SLKELGEMLEPPVGKSGVNHRLRKIEKIAEELRT).

The protein belongs to the WhiA family.

Functionally, involved in cell division and chromosome segregation. In Clostridium perfringens (strain ATCC 13124 / DSM 756 / JCM 1290 / NCIMB 6125 / NCTC 8237 / Type A), this protein is Probable cell division protein WhiA.